The following is a 704-amino-acid chain: Inhibitor of carbonic anhydrase (704 aa).

Residues 1–19 (MRLAFCVLLCAGSLGLCLA) form the signal peptide. Transferrin-like domains are found at residues 25–347 (VRWC…HLRR) and 357–689 (VMWC…NVRQ). 16 cysteine pairs are disulfide-bonded: cysteine 28/cysteine 67, cysteine 38/cysteine 58, cysteine 137/cysteine 213, cysteine 172/cysteine 188, cysteine 175/cysteine 196, cysteine 185/cysteine 198, cysteine 246/cysteine 260, cysteine 360/cysteine 392, cysteine 370/cysteine 383, cysteine 417/cysteine 699, cysteine 440/cysteine 662, cysteine 472/cysteine 549, cysteine 496/cysteine 690, cysteine 506/cysteine 520, cysteine 517/cysteine 532, and cysteine 589/cysteine 603. A glycan (N-linked (GlcNAc...) asparagine) is linked at asparagine 491.

Belongs to the transferrin family. In terms of assembly, monomer. Interacts (via transferrin-like domain 2) with CA2. N-glycosylated. Blood plasma (at protein level).

It localises to the secreted. Its function is as follows. Inhibitor for carbonic anhydrase 2 (CA2). Does not bind iron ions. This chain is Inhibitor of carbonic anhydrase, found in Sus scrofa (Pig).